The chain runs to 346 residues: Structure-specific endonuclease subunit SLX1 (346 aa).

A GIY-YIG domain is found at 22–105; sequence DFYGVYLLRS…QHPYQTRHIK (84 aa). An SLX1-type zinc finger spans residues 216 to 306; that stretch reads CFICNETIDY…TPLQGKCLSC (91 aa).

This sequence belongs to the SLX1 family. In terms of assembly, forms a heterodimer with SLX4. A divalent metal cation is required as a cofactor.

The protein resides in the nucleus. Catalytic subunit of the SLX1-SLX4 structure-specific endonuclease that resolves DNA secondary structures generated during DNA repair and recombination. Has endonuclease activity towards branched DNA substrates, introducing single-strand cuts in duplex DNA close to junctions with ss-DNA. In Debaryomyces hansenii (strain ATCC 36239 / CBS 767 / BCRC 21394 / JCM 1990 / NBRC 0083 / IGC 2968) (Yeast), this protein is Structure-specific endonuclease subunit SLX1.